The primary structure comprises 131 residues: Leptin receptor gene-related protein (131 aa).

4 helical membrane-spanning segments follow: residues 7 to 27, 32 to 52, 69 to 89, and 100 to 120; these read LVAL…GCAL, VYWP…HFIA, LAYF…VILA, and GLVL…FLVF.

The protein belongs to the OB-RGRP/VPS55 family. In terms of assembly, interacts with LEPR. Interacts with RAB13.

It localises to the golgi apparatus membrane. The protein localises to the endosome membrane. In terms of biological role, negatively regulates leptin receptor (LEPR) cell surface expression, and thus decreases response to leptin/LEP. Negatively regulates growth hormone (GH) receptor cell surface expression in liver. May play a role in liver resistance to GH during periods of reduced nutrient availability. In Bos taurus (Bovine), this protein is Leptin receptor gene-related protein (LEPROT).